The sequence spans 339 residues: GTP 3',8-cyclase (339 aa).

The Radical SAM core domain occupies 13–249 (RYGRPLRDLR…GEVAQRHAFA (237 aa)). Arg22 contacts GTP. The [4Fe-4S] cluster site is built by Cys29 and Cys33. Tyr35 is a binding site for S-adenosyl-L-methionine. A [4Fe-4S] cluster-binding site is contributed by Cys36. Arg75 contacts GTP. An S-adenosyl-L-methionine-binding site is contributed by Gly79. Thr106 contributes to the GTP binding site. Ser130 contacts S-adenosyl-L-methionine. A GTP-binding site is contributed by Lys168. Met202 contacts S-adenosyl-L-methionine. 2 residues coordinate [4Fe-4S] cluster: Cys266 and Cys269. 271 to 273 (RAR) lines the GTP pocket. Residue Cys283 coordinates [4Fe-4S] cluster.

It belongs to the radical SAM superfamily. MoaA family. In terms of assembly, monomer and homodimer. [4Fe-4S] cluster serves as cofactor.

The catalysed reaction is GTP + AH2 + S-adenosyl-L-methionine = (8S)-3',8-cyclo-7,8-dihydroguanosine 5'-triphosphate + 5'-deoxyadenosine + L-methionine + A + H(+). It functions in the pathway cofactor biosynthesis; molybdopterin biosynthesis. Its function is as follows. Catalyzes the cyclization of GTP to (8S)-3',8-cyclo-7,8-dihydroguanosine 5'-triphosphate. This Xanthomonas campestris pv. campestris (strain B100) protein is GTP 3',8-cyclase.